The primary structure comprises 273 residues: MAIVKCKPTSPGRRHVVKIVNQELYKGKPFAALLDSKSKSGGRNNNGRITTRHIGGGHKQHYRIVDFKRDKDGIPAKVERLEYDPNRTANIALVLYADGERRYILAPKGLKAGDAIASGADAAIKVGNTLPMRNIPVGSTVHAVEMKPGKGAQLARSAGTFIQILAREGNYVTLRLRSGEVRKVLAECRATIGEVGNSEHMLRQLGKAGANRWRGIRPTVRGMAMNPVDHPHGGGEGRNKGMQPVSPWGQKAKGFKTRKNKRTDKYIVRRRNK.

2 disordered regions span residues Asp35–Ile54 and Gly222–Lys273. The span at Lys39 to Ile49 shows a compositional bias: polar residues. A compositionally biased stretch (basic and acidic residues) spans Asp229–Asn239. The span at Lys253–Lys273 shows a compositional bias: basic residues.

It belongs to the universal ribosomal protein uL2 family. In terms of assembly, part of the 50S ribosomal subunit. Forms a bridge to the 30S subunit in the 70S ribosome.

Its function is as follows. One of the primary rRNA binding proteins. Required for association of the 30S and 50S subunits to form the 70S ribosome, for tRNA binding and peptide bond formation. It has been suggested to have peptidyltransferase activity; this is somewhat controversial. Makes several contacts with the 16S rRNA in the 70S ribosome. The polypeptide is Large ribosomal subunit protein uL2 (Aeromonas salmonicida (strain A449)).